The following is a 48-amino-acid chain: MSLQNYHGMMNLKIVHIKDMLYHLRISAMTLAIKKRMKFRLNRAAWKM.

The chain is Putative protein P' from Bos taurus (Bovine).